We begin with the raw amino-acid sequence, 310 residues long: ADP-L-glycero-D-manno-heptose-6-epimerase (310 aa).

Residues 10 to 11 (LI), 31 to 32 (DN), lysine 38, lysine 53, 75 to 79 (EGACS), and asparagine 92 contribute to the NADP(+) site. Tyrosine 140 acts as the Proton acceptor in catalysis. NADP(+) is bound at residue lysine 144. Asparagine 169 lines the substrate pocket. NADP(+)-binding residues include valine 170 and lysine 178. The Proton acceptor role is filled by lysine 178. Substrate is bound by residues serine 180, histidine 187, 201 to 204 (FAGS), arginine 209, and tyrosine 272.

Belongs to the NAD(P)-dependent epimerase/dehydratase family. HldD subfamily. As to quaternary structure, homopentamer. NADP(+) serves as cofactor.

The catalysed reaction is ADP-D-glycero-beta-D-manno-heptose = ADP-L-glycero-beta-D-manno-heptose. The protein operates within nucleotide-sugar biosynthesis; ADP-L-glycero-beta-D-manno-heptose biosynthesis; ADP-L-glycero-beta-D-manno-heptose from D-glycero-beta-D-manno-heptose 7-phosphate: step 4/4. In terms of biological role, catalyzes the interconversion between ADP-D-glycero-beta-D-manno-heptose and ADP-L-glycero-beta-D-manno-heptose via an epimerization at carbon 6 of the heptose. This Erwinia tasmaniensis (strain DSM 17950 / CFBP 7177 / CIP 109463 / NCPPB 4357 / Et1/99) protein is ADP-L-glycero-D-manno-heptose-6-epimerase.